Consider the following 250-residue polypeptide: Proteasome subunit alpha type-7-B (250 aa).

Residue Lys-62 forms a Glycyl lysine isopeptide (Lys-Gly) (interchain with G-Cter in ubiquitin) linkage.

It belongs to the peptidase T1A family. In terms of assembly, component of the 20S core complex of the 26S proteasome. The 26S proteasome is composed of a core protease (CP), known as the 20S proteasome, capped at one or both ends by the 19S regulatory particle (RP/PA700). The 20S proteasome core is composed of 28 subunits that are arranged in four stacked rings, resulting in a barrel-shaped structure. The two end rings are each formed by seven alpha subunits, and the two central rings are each formed by seven beta subunits. The catalytic chamber with the active sites is on the inside of the barrel.

The protein localises to the cytoplasm. The protein resides in the nucleus. Its function is as follows. The proteasome is a multicatalytic proteinase complex which is characterized by its ability to cleave peptides with Arg, Phe, Tyr, Leu, and Glu adjacent to the leaving group at neutral or slightly basic pH. The proteasome has an ATP-dependent proteolytic activity. The chain is Proteasome subunit alpha type-7-B (PAD2) from Arabidopsis thaliana (Mouse-ear cress).